Consider the following 331-residue polypeptide: Phosphatidylinositol transfer protein 4 (331 aa).

Belongs to the PtdIns transfer protein family. PI transfer class IIA subfamily.

In terms of biological role, catalyzes the transfer of PtdIns and phosphatidylcholine between membranes. This chain is Phosphatidylinositol transfer protein 4 (pitD), found in Dictyostelium discoideum (Social amoeba).